A 343-amino-acid polypeptide reads, in one-letter code: Vancomycin/teicoplanin A-type resistance protein VanA (343 aa).

ATP contacts are provided by residues Lys133, 169–171 (FVK), 177–178 (SS), 207–214 (EQAVSGCE), and Phe241. The ATP-grasp domain occupies 137–338 (YIVAKNAGIA…LPELIDRLIV (202 aa)). His244 contributes to the substrate binding site. ATP is bound at residue 304–305 (NE). Mg(2+) contacts are provided by Glu305 and Asn307.

The protein belongs to the D-alanine--D-alanine ligase family. Mg(2+) is required as a cofactor. Requires Mn(2+) as cofactor.

The protein resides in the cell membrane. The enzyme catalyses (R)-lactate + D-alanine + ATP = D-alanyl-(R)-lactate + ADP + phosphate. Functionally, required for high-level resistance to glycopeptide antibiotics. D-Ala--D-Ala ligase of altered specificity which catalyzes ester bond formation between D-Ala and various D-hydroxy acids; produces a peptidoglycan which does not terminate in D-alanine but in D-lactate, thus preventing vancomycin or teicoplanin binding. This is Vancomycin/teicoplanin A-type resistance protein VanA (vanA) from Enterococcus faecium (Streptococcus faecium).